The chain runs to 449 residues: Cortexillin-2 (449 aa).

The interval 1–231 (MTDLHKEWEK…ILYTSLFFHA (231 aa)) is actin-binding. Calponin-homology (CH) domains follow at residues 10–119 (KVQE…RKYR) and 128–233 (KSSE…HAYR). Coiled coils occupy residues 232–364 (YRAK…AEGL) and 408–441 (QFEEQAKRLGSKVENENISLEKYLSLKEEELKSA).

This sequence belongs to the cortexillin family. As to quaternary structure, homodimer; parallel.

It localises to the cytoplasm. It is found in the cytoskeleton. Actin-bundling protein. When linked to F-actin the actin filaments form preferentially anti-parallel bundles that associate into meshworks. Plays a major role in cytokinesis. This is Cortexillin-2 (ctxB) from Heterostelium pallidum (strain ATCC 26659 / Pp 5 / PN500) (Cellular slime mold).